Consider the following 364-residue polypeptide: Serpentine receptor class epsilon-27 (364 aa).

Transmembrane regions (helical) follow at residues 31 to 51, 64 to 84, 125 to 145, 167 to 187, 195 to 215, 257 to 277, and 290 to 310; these read VIAS…VVSL, FIIL…GKLI, LLII…FGAV, IFIP…CSCL, IITI…VFFL, LIFS…TLLL, and NALF…IPAW.

Belongs to the nematode receptor-like protein sre family.

The protein resides in the membrane. In Caenorhabditis elegans, this protein is Serpentine receptor class epsilon-27 (sre-27).